Consider the following 985-residue polypeptide: Ephrin type-B receptor 1-A (985 aa).

A signal peptide spans 1-19; sequence MELNVLLLLLCLSGGQVGA. Residues 20–542 lie on the Extracellular side of the membrane; the sequence is VEETLMDTRT…YKSELREQLP (523 aa). The region spanning 21 to 203 is the Eph LBD domain; sequence EETLMDTRTA…FFKEMPSVVQ (183 aa). 2 Fibronectin type-III domains span residues 324-434 and 435-532; these read VPSG…TNQA and APSS…TAED. 3 N-linked (GlcNAc...) asparagine glycosylation sites follow: Asn-336, Asn-428, and Asn-482. A helical transmembrane segment spans residues 543-563; the sequence is LTGSAAAGVVFIVSLVAISIV. Topologically, residues 564–985 are cytoplasmic; it reads CSRKRTYSKE…QITQSPTSIA (422 aa). Residues 620 to 883 form the Protein kinase domain; sequence VKIEEVIGAG…EIVNTLRPMI (264 aa). ATP-binding positions include 626–634 and Lys-652; that span reads IGAGEFGEV. Residue Asp-745 is the Proton acceptor of the active site. An SAM domain is found at 912–976; it reads SAFTSVDDWL…LNSIQSMRVQ (65 aa). Residues 983–985 carry the PDZ-binding motif; sequence SIA.

The protein belongs to the protein kinase superfamily. Tyr protein kinase family. Ephrin receptor subfamily. Heterotetramer upon binding of the ligand. The heterotetramer is composed of an ephrin dimer and a receptor dimer. Oligomerization is probably required to induce biological responses. In terms of processing, phosphorylated. Autophosphorylation is stimulated by ligands.

Its subcellular location is the cell membrane. It localises to the early endosome membrane. The protein resides in the cell projection. It is found in the dendrite. The catalysed reaction is L-tyrosyl-[protein] + ATP = O-phospho-L-tyrosyl-[protein] + ADP + H(+). Its function is as follows. Receptor tyrosine kinase which binds promiscuously transmembrane ephrin-B family ligands residing on adjacent cells, leading to contact-dependent bidirectional signaling into neighboring cells. The signaling pathway downstream of the receptor is referred to as forward signaling while the signaling pathway downstream of the ephrin ligand is referred to as reverse signaling. May play a role in axon guidance during nervous system development. May also play an important redundant role with other ephrin-B receptors in development and maturation of dendritic spines and synapse formation. More generally, may play a role in targeted cell migration and adhesion. Upon activation by ephrin-B ligands activates the MAPK/ERK and the JNK signaling cascades to regulate cell migration and adhesion respectively. The polypeptide is Ephrin type-B receptor 1-A (ephb1-a) (Xenopus laevis (African clawed frog)).